Consider the following 92-residue polypeptide: Long neurotoxin 469 (92 aa).

A signal peptide spans 1 to 21; that stretch reads MKTLLLTLVVVTIVCLDLGDS. 5 disulfide bridges follow: Cys24–Cys41, Cys34–Cys62, Cys47–Cys51, Cys66–Cys77, and Cys78–Cys83.

The protein belongs to the three-finger toxin family. Long-chain subfamily. Type II alpha-neurotoxin sub-subfamily. As to expression, expressed by the venom gland.

It is found in the secreted. Functionally, binds with high affinity to muscular (alpha-1/CHRNA1) and neuronal (alpha-7/CHRNA7) nicotinic acetylcholine receptor (nAChR) and inhibits acetylcholine from binding to the receptor, thereby impairing neuromuscular and neuronal transmission. The sequence is that of Long neurotoxin 469 from Drysdalia coronoides (White-lipped snake).